The following is a 333-amino-acid chain: Heat shock transcription factor, X-linked member 4 (333 aa).

The disordered stretch occupies residues Met1 to Asn66. Over residues Gly29–Ser39 the composition is skewed to low complexity. The span at Ala49–Ser60 shows a compositional bias: polar residues. The DNA-binding element occupies Phe79 to Lys182. The disordered stretch occupies residues Gln227–Gly275. Over residues Gly228–Arg242 the composition is skewed to polar residues.

This sequence belongs to the HSF family.

The protein localises to the nucleus. The polypeptide is Heat shock transcription factor, X-linked member 4 (Homo sapiens (Human)).